A 183-amino-acid chain; its full sequence is ATP synthase subunit b, chloroplastic (183 aa).

A helical transmembrane segment spans residues 25-45; it reads DILATNLINLTVVVGVLIFFG.

It belongs to the ATPase B chain family. F-type ATPases have 2 components, F(1) - the catalytic core - and F(0) - the membrane proton channel. F(1) has five subunits: alpha(3), beta(3), gamma(1), delta(1), epsilon(1). F(0) has four main subunits: a(1), b(1), b'(1) and c(10-14). The alpha and beta chains form an alternating ring which encloses part of the gamma chain. F(1) is attached to F(0) by a central stalk formed by the gamma and epsilon chains, while a peripheral stalk is formed by the delta, b and b' chains.

The protein resides in the plastid. The protein localises to the chloroplast thylakoid membrane. Functionally, f(1)F(0) ATP synthase produces ATP from ADP in the presence of a proton or sodium gradient. F-type ATPases consist of two structural domains, F(1) containing the extramembraneous catalytic core and F(0) containing the membrane proton channel, linked together by a central stalk and a peripheral stalk. During catalysis, ATP synthesis in the catalytic domain of F(1) is coupled via a rotary mechanism of the central stalk subunits to proton translocation. Component of the F(0) channel, it forms part of the peripheral stalk, linking F(1) to F(0). The protein is ATP synthase subunit b, chloroplastic of Sorghum bicolor (Sorghum).